The sequence spans 526 residues: Glutamate--cysteine ligase (526 aa).

Belongs to the glutamate--cysteine ligase type 1 family. Type 1 subfamily.

The catalysed reaction is L-cysteine + L-glutamate + ATP = gamma-L-glutamyl-L-cysteine + ADP + phosphate + H(+). Its pathway is sulfur metabolism; glutathione biosynthesis; glutathione from L-cysteine and L-glutamate: step 1/2. The sequence is that of Glutamate--cysteine ligase from Proteus mirabilis (strain HI4320).